Here is a 687-residue protein sequence, read N- to C-terminus: MSGNDARARVRSLPSTSSPLETRDSDEQESSSSQSQRGSRKRGPQRRATELPSAADLYVPSLPGLPDMATHPTHPLNIYAGMLPSYPGEGKVGGEGETGKDAKLYFLMAKARRNAGKERVIFWFNGGPGCSSFDGSLMEVGPFRTVPASETTTGMVEAKLVEGGWEEFATVVFVDQPPGTGYSYAATNGYLHDFDELSAHFIEFLQNFYTVFPELKGVDTYLAGESFAGQYIPFFADALINSAELPNFPLKGIAIGNGWIDPKEQYPGYVEFAYEKGLIDSGTPVSAAFVDLHKERADQMLTDQEAEEMEAALKRCQEEMDKYTDPFTTPVNIDHCGEVMDSVTRPFTQELNGKKVCMNVYDVRLVDDFPACGMNWPPDLPDVYTFLRQDEVISALHASSKETAWVECNNKVSYELNLKHSHMSAALLPSILEAGVPILMFAGAEDLICNYKGIERIVNGLEWGGEKGFANATSQEWYLNGTQVGTWQTSRGLSYAKIFDSSHMVGFDVPHVTNDMIMRFMDVDVSLLPGMISQWSSRIGDDERTMIHVGDAGEAGGVPLIKGGNTDWEAWYNAVFAFLVLGILVSIVGLYFYFRRKPVSYRSRIALKQRGRHRQSHDRDEGDTAERMPLGSERLELDDIERAEGYEFDDRDDEGYSGKGKGKGKELADDREEVMFALGDDDEDDRH.

The segment at 1-55 is disordered; sequence MSGNDARARVRSLPSTSSPLETRDSDEQESSSSQSQRGSRKRGPQRRATELPSAA. Residues Ser226 and Asp446 contribute to the active site. N-linked (GlcNAc...) asparagine glycans are attached at residues Asn471 and Asn480. His503 is an active-site residue. The helical transmembrane segment at 574-594 threads the bilayer; that stretch reads AVFAFLVLGILVSIVGLYFYF. The Cytoplasmic portion of the chain corresponds to 595–687; that stretch reads RRKPVSYRSR…LGDDDEDDRH (93 aa). Positions 610–671 are disordered; sequence RGRHRQSHDR…GKGKELADDR (62 aa). 2 stretches are compositionally biased toward basic and acidic residues: residues 617 to 626 and 633 to 645; these read HDRDEGDTAE and ERLE…RAEG. Over residues 646–655 the composition is skewed to acidic residues; sequence YEFDDRDDEG.

Belongs to the peptidase S10 family.

It localises to the golgi apparatus. It is found in the trans-Golgi network membrane. It carries out the reaction Preferential release of a C-terminal arginine or lysine residue.. Functionally, protease with a carboxypeptidase B-like function involved in the C-terminal processing of the lysine and arginine residues from protein precursors. Promotes cell fusion and is involved in the programmed cell death. The sequence is that of Pheromone-processing carboxypeptidase KEX1 (KEX1) from Cryptococcus gattii serotype B (strain WM276 / ATCC MYA-4071) (Filobasidiella gattii).